Consider the following 192-residue polypeptide: Peptidyl-tRNA hydrolase (192 aa).

Tyrosine 18 contributes to the tRNA binding site. Catalysis depends on histidine 23, which acts as the Proton acceptor. The tRNA site is built by phenylalanine 69, asparagine 71, and asparagine 117.

This sequence belongs to the PTH family. In terms of assembly, monomer.

Its subcellular location is the cytoplasm. The catalysed reaction is an N-acyl-L-alpha-aminoacyl-tRNA + H2O = an N-acyl-L-amino acid + a tRNA + H(+). Hydrolyzes ribosome-free peptidyl-tRNAs (with 1 or more amino acids incorporated), which drop off the ribosome during protein synthesis, or as a result of ribosome stalling. Functionally, catalyzes the release of premature peptidyl moieties from peptidyl-tRNA molecules trapped in stalled 50S ribosomal subunits, and thus maintains levels of free tRNAs and 50S ribosomes. The sequence is that of Peptidyl-tRNA hydrolase from Neisseria gonorrhoeae (strain ATCC 700825 / FA 1090).